Reading from the N-terminus, the 351-residue chain is Uroporphyrinogen decarboxylase (351 aa).

Residues 25–29 (RQAGR), Asp74, Tyr151, Ser206, and His325 each bind substrate.

This sequence belongs to the uroporphyrinogen decarboxylase family. Homodimer.

It is found in the cytoplasm. It carries out the reaction uroporphyrinogen III + 4 H(+) = coproporphyrinogen III + 4 CO2. Its pathway is porphyrin-containing compound metabolism; protoporphyrin-IX biosynthesis; coproporphyrinogen-III from 5-aminolevulinate: step 4/4. Catalyzes the decarboxylation of four acetate groups of uroporphyrinogen-III to yield coproporphyrinogen-III. The polypeptide is Uroporphyrinogen decarboxylase (Chlorobium phaeobacteroides (strain BS1)).